The primary structure comprises 497 residues: Guanosine-5'-triphosphate,3'-diphosphate pyrophosphatase (497 aa).

This sequence belongs to the GppA/Ppx family. GppA subfamily.

The enzyme catalyses guanosine 3'-diphosphate 5'-triphosphate + H2O = guanosine 3',5'-bis(diphosphate) + phosphate + H(+). It functions in the pathway purine metabolism; ppGpp biosynthesis; ppGpp from GTP: step 2/2. In terms of biological role, catalyzes the conversion of pppGpp to ppGpp. Guanosine pentaphosphate (pppGpp) is a cytoplasmic signaling molecule which together with ppGpp controls the 'stringent response', an adaptive process that allows bacteria to respond to amino acid starvation, resulting in the coordinated regulation of numerous cellular activities. This chain is Guanosine-5'-triphosphate,3'-diphosphate pyrophosphatase, found in Vibrio parahaemolyticus serotype O3:K6 (strain RIMD 2210633).